The chain runs to 3674 residues: Spectrin beta chain, non-erythrocytic 5 (3674 aa).

The tract at residues 1–37 (MAGQPHSPRELLGAAGHRSRRPSTELRVPPSPSLTMD) is disordered. The actin-binding stretch occupies residues 1–279 (MAGQPHSPRE…IMTYVSLYYH (279 aa)). Calponin-homology (CH) domains follow at residues 54–159 (QMQE…LRFQ) and 177–282 (LSTK…HYCS). Spectrin repeat units lie at residues 307-416 (LQTQ…ALQQ), 428-529 (ARRF…RKQV), 642-742 (AEFL…ARLQ), 747-810 (VLQY…QGRA), 900-996 (GFCS…AVQL), 1103-1206 (ARQS…WLQE), 1209-1311 (ELQK…RQLL), and 1315-1417 (QLQE…ELQQ). The segment at 1441–1469 (ALQSSETGQDLRSSQRLQKRHQQLESESR) is disordered. The span at 1442–1456 (LQSSETGQDLRSSQR) shows a compositional bias: polar residues. Spectrin repeat units follow at residues 1521 to 1624 (ELHQ…CLQQ), 1628 to 1727 (FQQY…RELE), 1731 to 1835 (RLHE…ALRD), 1842 to 1940 (VHRD…AQLE), 1944 to 2046 (LLAR…ERLQ), 2052 to 2146 (QLFL…HALH), 2150 to 2253 (LMAS…ELED), 2256 to 2361 (NFLE…QQLE), 2366 to 2467 (IHVL…EALD), 2471 to 2574 (QAQK…QLQQ), 2577 to 2680 (ELQL…RLEE), 2683 to 2784 (QLQA…AKLQ), 2791 to 2890 (RLRR…TALE), 2894 to 2997 (LLLK…LLQQ), 3000 to 3103 (EAQQ…GLQE), 3106 to 3209 (QLHQ…ENLA), 3213 to 3311 (EVHS…QWLA), 3318 to 3415 (AFLG…RWQR), and 3422 to 3488 (LQKL…EQEL). Residues 3533 to 3641 (TPTMEGSLEF…WWRALGSTAA (109 aa)) enclose the PH domain.

Belongs to the spectrin family. Probably associates with an alpha chain. Interacts (via C-terminus) with TRPC4. Expressed at very low levels in many tissues, with strongest expression in cerebellum, spinal cord, stomach, pituitary gland, liver, pancreas, salivary gland, kidney, bladder, and heart.

The protein resides in the cytoplasm. It localises to the cytoskeleton. The chain is Spectrin beta chain, non-erythrocytic 5 (SPTBN5) from Homo sapiens (Human).